Reading from the N-terminus, the 69-residue chain is Large ribosomal subunit protein bL31 (69 aa).

C17, C19, C37, and C40 together coordinate Zn(2+).

The protein belongs to the bacterial ribosomal protein bL31 family. Type A subfamily. In terms of assembly, part of the 50S ribosomal subunit. It depends on Zn(2+) as a cofactor.

In terms of biological role, binds the 23S rRNA. This chain is Large ribosomal subunit protein bL31, found in Caldicellulosiruptor saccharolyticus (strain ATCC 43494 / DSM 8903 / Tp8T 6331).